We begin with the raw amino-acid sequence, 311 residues long: Cell division control protein 2 homolog 3 (311 aa).

The region spanning 23 to 306 (YNRMDILGEG…AKAALQHPWF (284 aa)) is the Protein kinase domain. Residues 29–37 (LGEGTYGVV) and Lys52 each bind ATP. Thr33 carries the phosphothreonine modification. The residue at position 34 (Tyr34) is a Phosphotyrosine. Residue Asp145 is the Proton acceptor of the active site.

The protein belongs to the protein kinase superfamily. CMGC Ser/Thr protein kinase family. CDC2/CDKX subfamily. Forms a stable but non-covalent complex with a regulatory subunit and with a cyclin.

It catalyses the reaction L-seryl-[protein] + ATP = O-phospho-L-seryl-[protein] + ADP + H(+). It carries out the reaction L-threonyl-[protein] + ATP = O-phospho-L-threonyl-[protein] + ADP + H(+). Phosphorylation at Thr-33 or Tyr-34 inactivates the enzyme. Probably involved in the control of the cell cycle. The sequence is that of Cell division control protein 2 homolog 3 (CRK3) from Trypanosoma brucei brucei.